The chain runs to 1096 residues: Cohesin subunit scc-3 (1096 aa).

A compositionally biased stretch (polar residues) spans 1–21 (MSETPTDQSPQRMSTRNQARV). 2 disordered regions span residues 1–53 (MSET…KKRA) and 67–106 (NLNN…ESAE). Positions 261–312 (IELTQSKEKTSKQIEAEKAKLKNNSAGNEKYEALVAQRTQTEERAEEIRQII) form a coiled coil. An SCD domain is found at 320 to 405 (FVHRYRDVVP…NKFKDRLVSM (86 aa)). The segment at 1057 to 1096 (DNMSVRSGMTVTSNATMRSTASSTRGRGRGRGRSRIADDF) is disordered. A compositionally biased stretch (polar residues) spans 1060–1073 (SVRSGMTVTSNATM).

It belongs to the SCC3 family. As to quaternary structure, component of the cohesin complex, composed of the smc-1 and smc-3 heterodimer attached via their hinge domain, scc-1 which links them, and scc-3. Interacts with scc-1, smc-1 and tim-1. Expressed in gonadal cells.

It is found in the nucleus. It localises to the chromosome. Component of the cohesin complex, a complex required for the cohesion of sister chromatids after DNA replication. The cohesin complex apparently forms a large proteinaceous ring within which sister chromatids can be trapped. At anaphase, the scc-1 subunit of the complex is cleaved and dissociates from chromatin, allowing sister chromatids to segregate. The cohesin complex may also play a role in spindle pole assembly during mitosis. Plays an essential role in cell division during embryonic development. Required for the assembly of the synaptonemal complex between homologous chromosomes to promote sister chromatid cohesion during mitosis and meiosis. Has a role in stabilization of homologous chromosome associations during meiotic synapsis. Required for chromosome segregation during mitosis and meiosis. Plays a role in DNA double-strand break (DSB) repair during meiotic recombination and promotes the assembly of the 9-1-1 cell-cycle checkpoint response complex which is required for inducing apoptosis in response to DNA damage, at DNA damage sites. The sequence is that of Cohesin subunit scc-3 from Caenorhabditis elegans.